The sequence spans 106 residues: Small ribosomal subunit protein uS10 (106 aa).

Belongs to the universal ribosomal protein uS10 family. Part of the 30S ribosomal subunit.

Functionally, involved in the binding of tRNA to the ribosomes. The chain is Small ribosomal subunit protein uS10 from Pyrobaculum arsenaticum (strain DSM 13514 / JCM 11321 / PZ6).